Here is a 111-residue protein sequence, read N- to C-terminus: Entry-fusion complex protein OPG086 (111 aa).

The chain crosses the membrane as a helical; Signal-anchor span at residues 1–21 (MASLLYFILFLLFVCISYYFT). Residues 22–111 (YYPTNKLQAA…TLLPILLLSK (90 aa)) lie on the Virion surface side of the membrane.

This sequence belongs to the orthopoxvirus OPG086 family. In terms of assembly, interacts with OPG099/L5. Component of the entry fusion complex (EFC) composed of OPG053, OPG076, OPG086, OPG094, OPG095, OPG099, OPG107, OPG143, OPG104, OPG147 and OPG155. Except for OPG095 and OPG053, each of the EFC proteins is required for assembly or stability of the complex. Post-translationally, unglycosylated because produced in viral factories instead of the classic ER -Golgi route.

The protein resides in the virion membrane. Its function is as follows. Component of the entry fusion complex (EFC), which consists of 11 proteins. During cell infection, this complex mediates entry of the virion core into the host cytoplasm by a two-step mechanism consisting of lipid mixing of the viral and cellular membranes and subsequent pore formation. The chain is Entry-fusion complex protein OPG086 (OPG086) from Variola virus (isolate Human/India/Ind3/1967) (VARV).